The chain runs to 204 residues: Methyl-CpG-binding domain protein 3-like 2B (204 aa).

A compositionally biased stretch (basic and acidic residues) spans 126-137 (SLDRAGAERVRS). Residues 126–145 (SLDRAGAERVRSPLEPTPGR) are disordered.

The protein belongs to the MBD3L family.

The sequence is that of Methyl-CpG-binding domain protein 3-like 2B from Homo sapiens (Human).